The sequence spans 207 residues: Thiamine-phosphate synthase (207 aa).

4-amino-2-methyl-5-(diphosphooxymethyl)pyrimidine-binding positions include 35–39 (QYRDK) and Asn67. Mg(2+) contacts are provided by Asp68 and Asp86. Thr105 contacts 4-amino-2-methyl-5-(diphosphooxymethyl)pyrimidine. 132-134 (SVT) is a 2-[(2R,5Z)-2-carboxy-4-methylthiazol-5(2H)-ylidene]ethyl phosphate binding site. A 4-amino-2-methyl-5-(diphosphooxymethyl)pyrimidine-binding site is contributed by Lys135. Gly162 contributes to the 2-[(2R,5Z)-2-carboxy-4-methylthiazol-5(2H)-ylidene]ethyl phosphate binding site.

Belongs to the thiamine-phosphate synthase family. The cofactor is Mg(2+).

It catalyses the reaction 2-[(2R,5Z)-2-carboxy-4-methylthiazol-5(2H)-ylidene]ethyl phosphate + 4-amino-2-methyl-5-(diphosphooxymethyl)pyrimidine + 2 H(+) = thiamine phosphate + CO2 + diphosphate. The catalysed reaction is 2-(2-carboxy-4-methylthiazol-5-yl)ethyl phosphate + 4-amino-2-methyl-5-(diphosphooxymethyl)pyrimidine + 2 H(+) = thiamine phosphate + CO2 + diphosphate. It carries out the reaction 4-methyl-5-(2-phosphooxyethyl)-thiazole + 4-amino-2-methyl-5-(diphosphooxymethyl)pyrimidine + H(+) = thiamine phosphate + diphosphate. It participates in cofactor biosynthesis; thiamine diphosphate biosynthesis; thiamine phosphate from 4-amino-2-methyl-5-diphosphomethylpyrimidine and 4-methyl-5-(2-phosphoethyl)-thiazole: step 1/1. Condenses 4-methyl-5-(beta-hydroxyethyl)thiazole monophosphate (THZ-P) and 2-methyl-4-amino-5-hydroxymethyl pyrimidine pyrophosphate (HMP-PP) to form thiamine monophosphate (TMP). This Pseudomonas putida (strain W619) protein is Thiamine-phosphate synthase.